A 602-amino-acid chain; its full sequence is Probable translation initiation factor IF-2 (602 aa).

Residues 18–233 (LRTPIVCVMG…LVGLAQRFLK (216 aa)) enclose the tr-type G domain. The tract at residues 27–34 (GHVDHGKT) is G1. A GTP-binding site is contributed by 27–34 (GHVDHGKT). Positions 52–56 (AITQH) are G2. The tract at residues 88–91 (DTPG) is G3. Residues 88–92 (DTPGH) and 142–145 (NKID) contribute to the GTP site. The G4 stretch occupies residues 142–145 (NKID). Positions 210–212 (SAI) are G5.

The protein belongs to the TRAFAC class translation factor GTPase superfamily. Classic translation factor GTPase family. IF-2 subfamily.

Function in general translation initiation by promoting the binding of the formylmethionine-tRNA to ribosomes. Seems to function along with eIF-2. The protein is Probable translation initiation factor IF-2 of Methanothrix thermoacetophila (strain DSM 6194 / JCM 14653 / NBRC 101360 / PT) (Methanosaeta thermophila).